Reading from the N-terminus, the 126-residue chain is Fluoride-specific ion channel FluC (126 aa).

Transmembrane regions (helical) follow at residues Leu-7–Leu-27, Phe-36–Ala-56, Gly-74–Leu-94, and Gly-98–Ala-118. Na(+) is bound by residues Gly-77 and Thr-80.

It belongs to the fluoride channel Fluc/FEX (TC 1.A.43) family.

The protein resides in the cell membrane. It carries out the reaction fluoride(in) = fluoride(out). With respect to regulation, na(+) is not transported, but it plays an essential structural role and its presence is essential for fluoride channel function. Its function is as follows. Fluoride-specific ion channel. Important for reducing fluoride concentration in the cell, thus reducing its toxicity. In Deinococcus radiodurans (strain ATCC 13939 / DSM 20539 / JCM 16871 / CCUG 27074 / LMG 4051 / NBRC 15346 / NCIMB 9279 / VKM B-1422 / R1), this protein is Fluoride-specific ion channel FluC.